The chain runs to 355 residues: Ubiquinone biosynthesis protein COQ4 homolog, mitochondrial (355 aa).

The Zn(2+) site is built by His-134, Asp-135, His-138, and Glu-150.

Belongs to the COQ4 family. In terms of assembly, component of a multi-subunit COQ enzyme complex. Zn(2+) serves as cofactor.

Its subcellular location is the mitochondrion inner membrane. The enzyme catalyses a 4-hydroxy-3-methoxy-5-(all-trans-polyprenyl)benzoate + H(+) = a 2-methoxy-6-(all-trans-polyprenyl)phenol + CO2. It participates in cofactor biosynthesis; ubiquinone biosynthesis. Lyase that catalyzes the C1-decarboxylation of 4-hydroxy-3-methoxy-5-(all-trans-polyprenyl)benzoic acid into 2-methoxy-6-(all-trans-polyprenyl)phenol during ubiquinone biosynthesis. This Plasmodium chabaudi chabaudi protein is Ubiquinone biosynthesis protein COQ4 homolog, mitochondrial.